A 393-amino-acid polypeptide reads, in one-letter code: Putative N(4)-(beta-N-acetylglucosaminyl)-L-asparaginase GH22932 (393 aa).

The disordered stretch occupies residues 15–41 (ALKPITNSSSDTITPNPNLITTSRGSS). Residues 19-41 (ITNSSSDTITPNPNLITTSRGSS) show a composition bias toward polar residues. Disulfide bonds link Cys-100–Cys-105 and Cys-199–Cys-215. Thr-246 (nucleophile) is an active-site residue. Residues 274-277 (RVGD) and 297-300 (TGDG) contribute to the substrate site. Cys-357 and Cys-381 are disulfide-bonded.

It belongs to the Ntn-hydrolase family. In terms of assembly, heterotetramer of two alpha and two beta chains arranged as a dimer of alpha/beta heterodimers. Post-translationally, cleaved into an alpha and beta chain by autocatalysis; this activates the enzyme. The N-terminal residue of the beta subunit is responsible for the nucleophile hydrolase activity.

The enzyme catalyses N(4)-(beta-N-acetyl-D-glucosaminyl)-L-asparagine + H2O = N-acetyl-beta-D-glucosaminylamine + L-aspartate + H(+). Functionally, cleaves the GlcNAc-Asn bond which joins oligosaccharides to the peptide of asparagine-linked glycoproteins. The protein is Putative N(4)-(beta-N-acetylglucosaminyl)-L-asparaginase GH22932 of Drosophila grimshawi (Hawaiian fruit fly).